The following is a 346-amino-acid chain: MSFRTIEWRDDKVVMIDQTRLPGEEVYCEYADYKSVAEAIRGMVIRGAPAIGVAAAMGVALGAREIIADTYESFFRQMENVCDVMARTRPTAVNLFWAIERMKRVADENRDKPLDQLREILKTEAIRIEQEDLELCKAIGRHGAALIPEGATVLTHCNAGGLATAGYGTALGVIRAAHDAGKKIQVFADETRPWLQGARLTAWELMKDGIPVTLISDNMAGFFMKRGEIACCVVGADRIAANGDTANKIGTYSVAVLAKENNIPFYVAAPTTTLDLSLENGDQIPIEERHSREVTHLHGFPVAPEGIRVRNPAFDVTPARYISAIITEQGVVSGDYVTGLRGLVAP.

Residues 46 to 48, arginine 89, and glutamine 196 contribute to the substrate site; that span reads RGA. Aspartate 237 acts as the Proton donor in catalysis. 247 to 248 provides a ligand contact to substrate; the sequence is NK.

The protein belongs to the eIF-2B alpha/beta/delta subunits family. MtnA subfamily.

The enzyme catalyses 5-(methylsulfanyl)-alpha-D-ribose 1-phosphate = 5-(methylsulfanyl)-D-ribulose 1-phosphate. The protein operates within amino-acid biosynthesis; L-methionine biosynthesis via salvage pathway; L-methionine from S-methyl-5-thio-alpha-D-ribose 1-phosphate: step 1/6. In terms of biological role, catalyzes the interconversion of methylthioribose-1-phosphate (MTR-1-P) into methylthioribulose-1-phosphate (MTRu-1-P). The chain is Methylthioribose-1-phosphate isomerase from Geobacter sulfurreducens (strain ATCC 51573 / DSM 12127 / PCA).